The chain runs to 332 residues: D-galactose/methyl-galactoside binding periplasmic protein MglB (332 aa).

A signal peptide spans 1–23 (MNKKVLTLSAVMASLLFGAHAHA). Beta-D-galactose is bound by residues Asp37 and Asn114. Asp37 and Asn114 together coordinate beta-D-glucose. The Ca(2+) site is built by Asp157, Asn159, Asp161, Lys163, and Gln165. Beta-D-galactose contacts are provided by His175, Asp177, and Arg181. Positions 175, 177, and 181 each coordinate beta-D-glucose. Glu228 is a binding site for Ca(2+). Beta-D-galactose is bound by residues Asn234, Asp259, and Asn279. Beta-D-glucose contacts are provided by Asn234, Asp259, and Asn279.

It belongs to the bacterial solute-binding protein 2 family. In terms of assembly, the ABC transporter complex is composed of one ATP-binding protein (MglA), two transmembrane proteins (MglC) and a solute-binding protein (MglB).

Its subcellular location is the periplasm. Its function is as follows. Part of the ABC transporter complex MglABC involved in galactose/methyl galactoside import. In addition, binds D-galactose and D-glucose and plays a role in the chemotaxis towards these two sugars by interacting with the Trg chemoreceptor. The polypeptide is D-galactose/methyl-galactoside binding periplasmic protein MglB (mglB) (Salmonella typhimurium (strain LT2 / SGSC1412 / ATCC 700720)).